We begin with the raw amino-acid sequence, 157 residues long: 2-C-methyl-D-erythritol 2,4-cyclodiphosphate synthase (157 aa).

The a divalent metal cation site is built by Asp-9 and His-11. 4-CDP-2-C-methyl-D-erythritol 2-phosphate is bound by residues 9 to 11 (DVH) and 35 to 36 (HS). His-43 is an a divalent metal cation binding site. 4-CDP-2-C-methyl-D-erythritol 2-phosphate-binding positions include 57-59 (DIG), 62-66 (FPDTD), 101-107 (AEKPKMA), 133-136 (TTTE), Phe-140, and Arg-143.

It belongs to the IspF family. Homotrimer. A divalent metal cation is required as a cofactor.

It catalyses the reaction 4-CDP-2-C-methyl-D-erythritol 2-phosphate = 2-C-methyl-D-erythritol 2,4-cyclic diphosphate + CMP. It participates in isoprenoid biosynthesis; isopentenyl diphosphate biosynthesis via DXP pathway; isopentenyl diphosphate from 1-deoxy-D-xylulose 5-phosphate: step 4/6. Its function is as follows. Involved in the biosynthesis of isopentenyl diphosphate (IPP) and dimethylallyl diphosphate (DMAPP), two major building blocks of isoprenoid compounds. Catalyzes the conversion of 4-diphosphocytidyl-2-C-methyl-D-erythritol 2-phosphate (CDP-ME2P) to 2-C-methyl-D-erythritol 2,4-cyclodiphosphate (ME-CPP) with a corresponding release of cytidine 5-monophosphate (CMP). In Listeria monocytogenes serotype 4b (strain F2365), this protein is 2-C-methyl-D-erythritol 2,4-cyclodiphosphate synthase.